The primary structure comprises 440 residues: Proline--tRNA ligase (440 aa).

It belongs to the class-II aminoacyl-tRNA synthetase family. ProS type 2 subfamily. In terms of assembly, homodimer.

The protein resides in the cytoplasm. It carries out the reaction tRNA(Pro) + L-proline + ATP = L-prolyl-tRNA(Pro) + AMP + diphosphate. Its function is as follows. Catalyzes the attachment of proline to tRNA(Pro) in a two-step reaction: proline is first activated by ATP to form Pro-AMP and then transferred to the acceptor end of tRNA(Pro). This is Proline--tRNA ligase from Xanthobacter autotrophicus (strain ATCC BAA-1158 / Py2).